The following is an 82-amino-acid chain: Delta-actitoxin-Aeq2b 1 (82 aa).

The N-terminal stretch at 1–19 (MNRLMILVFAAVILALASA) is a signal peptide. A propeptide spanning residues 20 to 26 (DEDVDIA) is cleaved from the precursor. Intrachain disulfides connect C32-C79, C34-C69, and C62-C80.

The protein belongs to the sea anemone sodium channel inhibitory toxin family. Type I subfamily.

It is found in the secreted. The protein localises to the nematocyst. Functionally, binds specifically to voltage-gated sodium channels (Nav), thereby delaying their inactivation during signal transduction. Causes death to crabs. In Actinia equina (Beadlet anemone), this protein is Delta-actitoxin-Aeq2b 1.